The following is a 365-amino-acid chain: Phospho-N-acetylmuramoyl-pentapeptide-transferase (365 aa).

Transmembrane regions (helical) follow at residues 22 to 42, 74 to 94, 95 to 115, 134 to 154, 168 to 188, 201 to 221, 240 to 260, 267 to 287, 292 to 312, and 342 to 362; these read YISVRIIMISITSLLITLALG, TMGGVLILSSVIISCLLWGNL, TSIYLWILILVVIFFGAIGFF, KFALQSIFSIVLAIVLFYLLS, SLYIPMGIVIFVVLAFFIING, GLAIVPVVLVAAGLGIYAYIE, LAEVAVFCAAVCGSGLAFLWF, VFMGDVGSLTLGAVLGVIAVM, LIFFIMGLLFVVEALSVMLQV, and KVVIRFWIISLILFLIGFAAI.

It belongs to the glycosyltransferase 4 family. MraY subfamily. Requires Mg(2+) as cofactor.

The protein resides in the cell inner membrane. It carries out the reaction UDP-N-acetyl-alpha-D-muramoyl-L-alanyl-gamma-D-glutamyl-meso-2,6-diaminopimeloyl-D-alanyl-D-alanine + di-trans,octa-cis-undecaprenyl phosphate = di-trans,octa-cis-undecaprenyl diphospho-N-acetyl-alpha-D-muramoyl-L-alanyl-D-glutamyl-meso-2,6-diaminopimeloyl-D-alanyl-D-alanine + UMP. It participates in cell wall biogenesis; peptidoglycan biosynthesis. Its function is as follows. Catalyzes the initial step of the lipid cycle reactions in the biosynthesis of the cell wall peptidoglycan: transfers peptidoglycan precursor phospho-MurNAc-pentapeptide from UDP-MurNAc-pentapeptide onto the lipid carrier undecaprenyl phosphate, yielding undecaprenyl-pyrophosphoryl-MurNAc-pentapeptide, known as lipid I. The chain is Phospho-N-acetylmuramoyl-pentapeptide-transferase from Francisella tularensis subsp. holarctica (strain OSU18).